Consider the following 635-residue polypeptide: Sodium-dependent multivitamin transporter (635 aa).

Transmembrane regions (helical) follow at residues 24–44 (FSIM…AIGL), 68–88 (CLPV…ILGV), and 101–121 (FLGC…IPVF). Asn138 carries N-linked (GlcNAc...) asparagine glycosylation. 9 consecutive transmembrane segments (helical) span residues 143–163 (VCGT…VLYA), 176–196 (LWLS…LGGL), 199–219 (VIWT…AVII), 256–276 (FWTL…VNQA), 297–317 (VFPF…VMFA), 336–356 (FVLY…GLFI), 396–416 (IMLS…MAYI), 428–448 (ISIF…GMFF), and 456–476 (AVVG…GSIV). Residues Asn489 and Asn498 are each glycosylated (N-linked (GlcNAc...) asparagine). The chain crosses the membrane as a helical span at residues 528-548 (LWYSAHNSTTVIVVGLIVSLL).

This sequence belongs to the sodium:solute symporter (SSF) (TC 2.A.21) family. As to quaternary structure, interacts with PDZD11. Post-translationally, may be glycosylated. As to expression, expressed in microvessels of the brain (at protein level). Expressed in heart, brain, placenta, lung, liver, skeletal muscle, kidney, and pancreas.

The protein resides in the cell membrane. The protein localises to the apical cell membrane. The enzyme catalyses biotin(out) + 2 Na(+)(out) = biotin(in) + 2 Na(+)(in). It carries out the reaction (R)-pantothenate(out) + 2 Na(+)(out) = (R)-pantothenate(in) + 2 Na(+)(in). The catalysed reaction is (R)-lipoate(out) + 2 Na(+)(out) = (R)-lipoate(in) + 2 Na(+)(in). It catalyses the reaction iodide(out) + 2 Na(+)(out) = iodide(in) + 2 Na(+)(in). Sodium-dependent multivitamin transporter that mediates the electrogenic transport of pantothenate, biotin, lipoate and iodide. Functions as a Na(+)-coupled substrate symporter where the stoichiometry of Na(+):substrate is 2:1, creating an electrochemical Na(+) gradient used as driving force for substrate uptake. Required for biotin and pantothenate uptake in the intestine across the brush border membrane. Plays a role in the maintenance of intestinal mucosa integrity, by providing the gut mucosa with biotin. Contributes to the luminal uptake of biotin and pantothenate into the brain across the blood-brain barrier. The polypeptide is Sodium-dependent multivitamin transporter (Homo sapiens (Human)).